The primary structure comprises 1347 residues: Protocadherin-11 X-linked (1347 aa).

The signal sequence occupies residues M1–A23. Residues Q24–K812 lie on the Extracellular side of the membrane. 7 consecutive Cadherin domains span residues K26 to F139, P140 to F249, K250 to I355, N362 to F466, T467 to F570, T571 to F673, and P677 to T795. 3 N-linked (GlcNAc...) asparagine glycosylation sites follow: N27, N48, and N54. A glycan (N-linked (GlcNAc...) asparagine) is linked at N344. Residue N553 is glycosylated (N-linked (GlcNAc...) asparagine). N773 carries N-linked (GlcNAc...) asparagine glycosylation. A helical transmembrane segment spans residues I813 to V833. At V834–L1347 the chain is on the cytoplasmic side. 3 disordered regions span residues L1057–Q1091, R1097–F1116, and T1325–L1347.

Its subcellular location is the cell membrane. Potential calcium-dependent cell-adhesion protein. The chain is Protocadherin-11 X-linked (PCDH11X) from Pan troglodytes (Chimpanzee).